A 343-amino-acid chain; its full sequence is Nuclear distribution protein nudE-like 1 (343 aa).

Residues 25-190 (KYKQSFQEAR…LAVRERQQEV (166 aa)) are a coiled coil. 2 disordered regions span residues 184-204 (RERQ…LDCE) and 322-343 (QGTP…PLSV).

It belongs to the nudE family. Phosphorylated in mitosis.

It localises to the cytoplasm. It is found in the cytoskeleton. The protein resides in the microtubule organizing center. The protein localises to the centrosome. Its subcellular location is the spindle. Required for organization of the cellular microtubule array and microtubule anchoring at the centrosome. Positively regulates the activity of the minus-end directed microtubule motor protein dynein. May enhance dynein-mediated microtubule sliding by targeting dynein to the microtubule plus end. Positively regulates lysosome peripheral distribution and ruffled border formation in osteoclasts. This chain is Nuclear distribution protein nudE-like 1 (NDEL1), found in Gallus gallus (Chicken).